The sequence spans 316 residues: Polyprenyl transferase prhE (316 aa).

Helical transmembrane passes span 45 to 65 (VVGVAYTAAISPVTLPSTFLL), 69 to 89 (VILSLWGFCIRSAGCAWNDLI), 114 to 134 (GAALLAAFMFGCGGSLLLLLP), 135 to 155 (SQCAFEAAIVVFFALLYPFGK), 163 to 183 (LILTNIAWAIPMAMSSLDMSP), 188 to 208 (IPTLAMSFSIASVIVMIDIVY), 231 to 253 (ITDQIAYGLFFSGTLSLLVGGIL), 257 to 276 (GFPFLIFSVGGHFLGFLRFL), and 296 to 316 (SCLLATMLLVFGLCFEYCVRL).

Belongs to the UbiA prenyltransferase family. The cofactor is Mg(2+).

It localises to the membrane. It carries out the reaction 3,5-dimethylorsellinate + (2E,6E)-farnesyl diphosphate = (3R)-3-farnesyl-6-hydroxy-2,3,5-trimethyl-4-oxocyclohexa-1,5-diene-1-carboxylate + diphosphate + H(+). The protein operates within secondary metabolite biosynthesis; terpenoid biosynthesis. Polyprenyl transferase; part of the gene cluster that mediates the biosynthesis of paraherquonin, a meroterpenoid with a unique, highly congested hexacyclic molecular architecture. The first step of the pathway is the synthesis of 3,5-dimethylorsellinic acid (DMOA) by the polyketide synthase prhL. Synthesis of DMOA is followed by farnesylation by the prenyltransferase prhE, methylesterification by the methyl-transferase prhM, epoxidation of the prenyl chain by the flavin-dependent monooxygenase prhF, and cyclization of the farnesyl moiety by the terpene cyclase prhH, to yield the tetracyclic intermediate, protoaustinoid A. The short chain dehydrogenase prhI then oxidizes the C-3 alcohol group of the terpene cyclase product to transform protoaustinoid A into protoaustinoid B. The FAD-binding monooxygenase prhJ catalyzes the oxidation of protoaustinoid B into preaustinoid A which is further oxidized into preaustinoid A1 by FAD-binding monooxygenase phrK. Finally, prhA leads to berkeleydione via the berkeleyone B intermediate. PrhA is a multifunctional dioxygenase that first desaturates at C5-C6 to form berkeleyone B, followed by rearrangement of the A/B-ring to form the cycloheptadiene moiety in berkeleydione. Berkeleydione serves as the key intermediate for the biosynthesis of paraherquonin as well as many other meroterpenoids. The cytochrome P450 monooxygenases prhB, prhD, and prhN, as well as the isomerase prhC, are probably involved in the late stage of paraherquonin biosynthesis, after the production of berkeleydione. Especially prhC might be a multifunctional enzyme that catalyzes the D-ring expansion via intramolecular methoxy rearrangement, as well as the hydrolysis of the expanded D-ring. This is Polyprenyl transferase prhE from Penicillium brasilianum.